A 127-amino-acid polypeptide reads, in one-letter code: Histone H2B.2 (127 aa).

Positions 1–35 are disordered; that stretch reads MAPKAEKKPASKAPAAKKTTASTDASKKRTKTRKE. An N6-acetyllysine; alternate mark is found at Lys7 and Lys8. Residues Lys7 and Lys8 each participate in a glycyl lysine isopeptide (Lys-Gly) (interchain with G-Cter in SUMO); alternate cross-link. Ser11 bears the Phosphoserine mark. Low complexity predominate over residues 11–24; that stretch reads SKAPAAKKTTASTD. N6-acetyllysine is present on Lys12. Lys120 is covalently cross-linked (Glycyl lysine isopeptide (Lys-Gly) (interchain with G-Cter in ubiquitin)).

This sequence belongs to the histone H2B family. The nucleosome is a histone octamer containing two molecules each of H2A, H2B, H3 and H4 assembled in one H3-H4 heterotetramer and two H2A-H2B heterodimers. The octamer wraps approximately 147 bp of DNA. In terms of processing, monoubiquitinated by the UBC2-BRE1 complex to form H2BK123ub1. H2BK123ub1 gives a specific tag for epigenetic transcriptional activation and is also prerequisite for H3K4me and H3K79me formation. H2BK123ub1 also modulates the formation of double-strand breaks during meiosis and is a prerequisite for DNA-damage checkpoint activation. Phosphorylated by STE20 to form H2BS10ph during progression through meiotic prophase. May be correlated with chromosome condensation. Post-translationally, acetylation of N-terminal lysines and particularly formation of H2BK11ac has a positive effect on transcription. In terms of processing, sumoylation to form H2BK6su or H2BK7su occurs preferentially near the telomeres and represses gene transcription.

It is found in the nucleus. It localises to the chromosome. Core component of nucleosome. Nucleosomes wrap and compact DNA into chromatin, limiting DNA accessibility to the cellular machineries which require DNA as a template. Histones thereby play a central role in transcription regulation, DNA repair, DNA replication and chromosomal stability. DNA accessibility is regulated via a complex set of post-translational modifications of histones, also called histone code, and nucleosome remodeling. This chain is Histone H2B.2 (HTB2), found in Eremothecium gossypii (strain ATCC 10895 / CBS 109.51 / FGSC 9923 / NRRL Y-1056) (Yeast).